Consider the following 212-residue polypeptide: MSALHKLKAYFGMVPADEIDEVYDDEVAYRDRYADPDTSYDAPSDRVGGRRRVAGGVRGGFQPEAEEDGGDYGEEFREPARSRRQWAPPETPVRAPLGSDAHREQVSRLRAVTDTGSHFNLSKITTLHPRSYSEARTIGEQYRDGTPVIMNLTEMDEADAKRLVDFAAGLAFALRGSIEKVTNRVFLLSPPNVDVAAEDKRRLAEGAFFNYG.

The disordered stretch occupies residues 32-104 (RYADPDTSYD…APLGSDAHRE (73 aa)). Residues 64–73 (EAEEDGGDYG) are compositionally biased toward acidic residues.

This sequence belongs to the SepF family. As to quaternary structure, homodimer. Interacts with FtsZ.

It is found in the cytoplasm. In terms of biological role, cell division protein that is part of the divisome complex and is recruited early to the Z-ring. Probably stimulates Z-ring formation, perhaps through the cross-linking of FtsZ protofilaments. Its function overlaps with FtsA. The protein is Cell division protein SepF of Saccharopolyspora erythraea (strain ATCC 11635 / DSM 40517 / JCM 4748 / NBRC 13426 / NCIMB 8594 / NRRL 2338).